The chain runs to 474 residues: Ribulose bisphosphate carboxylase/oxygenase activase, chloroplastic (474 aa).

The transit peptide at methionine 1–leucine 58 directs the protein to the chloroplast. Threonine 78 bears the Phosphothreonine; by CK2 mark. Residue glycine 165–serine 172 participates in ATP binding. Threonine 283 carries the phosphothreonine modification.

The protein belongs to the RuBisCO activase family. In terms of processing, phosphorylated at Thr-78 by CK2.

Its subcellular location is the plastid. It localises to the chloroplast stroma. The protein localises to the chloroplast. It is found in the plastoglobule. In terms of biological role, activation of RuBisCO (ribulose-1,5-bisphosphate carboxylase/oxygenase; EC 4.1.1.39) involves the ATP-dependent carboxylation of the epsilon-amino group of lysine leading to a carbamate structure. The sequence is that of Ribulose bisphosphate carboxylase/oxygenase activase, chloroplastic (RCA) from Arabidopsis thaliana (Mouse-ear cress).